Consider the following 116-residue polypeptide: Promotilin (116 aa).

A signal peptide spans Met-1–Ala-25. A disordered region spans residues Arg-39–Asn-74.

Belongs to the motilin family.

Its subcellular location is the secreted. Functionally, plays an important role in the regulation of interdigestive gastrointestinal motility and indirectly causes rhythmic contraction of duodenal and colonic smooth muscle. This chain is Promotilin (MLN), found in Felis catus (Cat).